The sequence spans 736 residues: Elongation factor 2 (736 aa).

Residues 18 to 234 enclose the tr-type G domain; sequence TRVRNIGIIA…VIDAYTASDK (217 aa). GTP-binding positions include 27-34, 93-97, and 147-150; these read AHVDHGKT, DTPGH, and NKVD. His603 carries the post-translational modification Diphthamide.

Belongs to the TRAFAC class translation factor GTPase superfamily. Classic translation factor GTPase family. EF-G/EF-2 subfamily.

It localises to the cytoplasm. Functionally, catalyzes the GTP-dependent ribosomal translocation step during translation elongation. During this step, the ribosome changes from the pre-translocational (PRE) to the post-translocational (POST) state as the newly formed A-site-bound peptidyl-tRNA and P-site-bound deacylated tRNA move to the P and E sites, respectively. Catalyzes the coordinated movement of the two tRNA molecules, the mRNA and conformational changes in the ribosome. This Saccharolobus islandicus (strain Y.N.15.51 / Yellowstone #2) (Sulfolobus islandicus) protein is Elongation factor 2.